Consider the following 186-residue polypeptide: Glycerol-3-phosphate acyltransferase 1 (186 aa).

Transmembrane regions (helical) follow at residues 9–29 (MQFL…AYIV), 58–78 (GYFV…VSIA), 85–105 (STFV…PVLF), 121–141 (IAFD…FYLI), and 161–181 (ILYS…VLIL).

It belongs to the PlsY family. As to quaternary structure, probably interacts with PlsX.

The protein resides in the cell membrane. The enzyme catalyses an acyl phosphate + sn-glycerol 3-phosphate = a 1-acyl-sn-glycero-3-phosphate + phosphate. Its pathway is lipid metabolism; phospholipid metabolism. Its function is as follows. Catalyzes the transfer of an acyl group from acyl-phosphate (acyl-PO(4)) to glycerol-3-phosphate (G3P) to form lysophosphatidic acid (LPA). This enzyme utilizes acyl-phosphate as fatty acyl donor, but not acyl-CoA or acyl-ACP. The sequence is that of Glycerol-3-phosphate acyltransferase 1 from Bacillus cereus (strain ZK / E33L).